The chain runs to 205 residues: MSLLVKVCGMTSKEDATMCEQLGVDFLGFIFHPSSPRNVDAAFARSVKTDGAKKVGVFVKQSATEVIETLKNGQLDFAQLHGGQNEEFCKAVGKERVIKVLWPQKYDSVKEFQADIDRFVPHCTYLLFDAGKSGGGHGIAMEFEVFKDVTIPVPWLLAGGLSAENLREALDTAQPNGVDLNSGVESEPGKKERNKLAAAFAAIGQ.

The protein belongs to the TrpF family.

It catalyses the reaction N-(5-phospho-beta-D-ribosyl)anthranilate = 1-(2-carboxyphenylamino)-1-deoxy-D-ribulose 5-phosphate. It functions in the pathway amino-acid biosynthesis; L-tryptophan biosynthesis; L-tryptophan from chorismate: step 3/5. In Maridesulfovibrio salexigens (strain ATCC 14822 / DSM 2638 / NCIMB 8403 / VKM B-1763) (Desulfovibrio salexigens), this protein is N-(5'-phosphoribosyl)anthranilate isomerase.